The chain runs to 765 residues: uncharacterized protein (765 aa).

A signal peptide spans 1-22 (MKLKGFLAVGVSVFGFSGLLMA). Cys23 carries N-palmitoyl cysteine lipidation. A lipid anchor (S-diacylglycerol cysteine) is attached at Cys23. Disordered regions lie at residues 177–203 (EGTP…LEIA) and 218–255 (TAQN…TTKS). Residues 179-192 (TPTSTTVQATVSSR) show a composition bias toward polar residues. Residues 236–247 (SSSSSSTTSTTG) are compositionally biased toward low complexity.

Belongs to the MG185/MG260 family.

It is found in the cell membrane. This is an uncharacterized protein from Mycoplasma genitalium (strain ATCC 33530 / DSM 19775 / NCTC 10195 / G37) (Mycoplasmoides genitalium).